The following is a 174-amino-acid chain: Protein SHI RELATED SEQUENCE 3 (174 aa).

Residues Cys-9, Cys-12, Cys-20, Cys-25, Cys-29, and Cys-36 each coordinate Zn(2+). The segment at residues 9 to 36 (CEDCGNQAKKDCVYMRCRTCCKSKAFHC) is a DNA-binding region (zn(2)-C6 fungal-type; degenerate). Residues 110-113 (IGGH) carry the Required for homo- and heterodimerization motif.

The protein belongs to the SHI protein family.

It is found in the nucleus. Its function is as follows. Transcription activator that binds DNA on 5'-ACTCTAC-3' and promotes auxin homeostasis-regulating gene expression (e.g. YUC genes), as well as genes affecting stamen development, cell expansion and timing of flowering. Synergistically with other SHI-related proteins, regulates gynoecium, stamen and leaf development in a dose-dependent manner, controlling apical-basal patterning. Promotes style and stigma formation, and influences vascular development during gynoecium development. May also have a role in the formation and/or maintenance of the shoot apical meristem (SAM). In Arabidopsis thaliana (Mouse-ear cress), this protein is Protein SHI RELATED SEQUENCE 3 (SRS3).